Reading from the N-terminus, the 332-residue chain is Anthranilate phosphoribosyltransferase (332 aa).

5-phospho-alpha-D-ribose 1-diphosphate is bound by residues Gly-79, 82 to 83 (GD), Ser-87, 89 to 92 (NIST), 107 to 115 (KHGNRSVSS), and Ser-119. Residue Gly-79 coordinates anthranilate. A Mg(2+)-binding site is contributed by Ser-91. Asn-110 serves as a coordination point for anthranilate. Arg-165 is an anthranilate binding site. Residues Asp-223 and Glu-224 each coordinate Mg(2+).

The protein belongs to the anthranilate phosphoribosyltransferase family. In terms of assembly, homodimer. Mg(2+) is required as a cofactor.

It carries out the reaction N-(5-phospho-beta-D-ribosyl)anthranilate + diphosphate = 5-phospho-alpha-D-ribose 1-diphosphate + anthranilate. Its pathway is amino-acid biosynthesis; L-tryptophan biosynthesis; L-tryptophan from chorismate: step 2/5. In terms of biological role, catalyzes the transfer of the phosphoribosyl group of 5-phosphorylribose-1-pyrophosphate (PRPP) to anthranilate to yield N-(5'-phosphoribosyl)-anthranilate (PRA). The sequence is that of Anthranilate phosphoribosyltransferase from Yersinia pestis bv. Antiqua (strain Antiqua).